A 462-amino-acid polypeptide reads, in one-letter code: Chromosomal replication initiator protein DnaA (462 aa).

Residues 1–86 (MSLSLWQQCL…EVGNKPVSQN (86 aa)) form a domain I, interacts with DnaA modulators region. Positions 86-125 (NDSPPQRVVTHTPVAPAPQNTSVRPSWDNTAVQPELSYRS) are domain II. Positions 126–342 (NVNPKHTFDN…GALNRVIANA (217 aa)) are domain III, AAA+ region. 4 residues coordinate ATP: glycine 170, glycine 172, lysine 173, and threonine 174. A domain IV, binds dsDNA region spans residues 343–462 (NFTGRAITID…FSNLIRTLSS (120 aa)).

It belongs to the DnaA family. Oligomerizes as a right-handed, spiral filament on DNA at oriC.

Its subcellular location is the cytoplasm. Functionally, plays an essential role in the initiation and regulation of chromosomal replication. ATP-DnaA binds to the origin of replication (oriC) to initiate formation of the DNA replication initiation complex once per cell cycle. Binds the DnaA box (a 9 base pair repeat at the origin) and separates the double-stranded (ds)DNA. Forms a right-handed helical filament on oriC DNA; dsDNA binds to the exterior of the filament while single-stranded (ss)DNA is stabiized in the filament's interior. The ATP-DnaA-oriC complex binds and stabilizes one strand of the AT-rich DNA unwinding element (DUE), permitting loading of DNA polymerase. After initiation quickly degrades to an ADP-DnaA complex that is not apt for DNA replication. Binds acidic phospholipids. The chain is Chromosomal replication initiator protein DnaA from Photorhabdus laumondii subsp. laumondii (strain DSM 15139 / CIP 105565 / TT01) (Photorhabdus luminescens subsp. laumondii).